A 216-amino-acid polypeptide reads, in one-letter code: UPF0193 protein EVG1 homolog (216 aa).

This sequence belongs to the UPF0193 (EVG1) family.

This chain is UPF0193 protein EVG1 homolog, found in Mus musculus (Mouse).